We begin with the raw amino-acid sequence, 118 residues long: Histone H2B.N (118 aa).

This sequence belongs to the histone H2B family. As to quaternary structure, the nucleosome is a histone octamer containing two molecules each of H2A, H2B, H3 and H4 assembled in one H3-H4 heterotetramer and two H2A-H2B heterodimers. The octamer wraps approximately 147 bp of DNA. In terms of tissue distribution, expressed in germline. Predominantly expressed in oocytes.

The protein localises to the nucleus. It localises to the chromosome. Its function is as follows. Core component of nucleosome. Nucleosomes wrap and compact DNA into chromatin, limiting DNA accessibility to the cellular machineries which require DNA as a template. Histones thereby play a central role in transcription regulation, DNA repair, DNA replication and chromosomal stability. DNA accessibility is regulated via a complex set of post-translational modifications of histones, also called histone code, and nucleosome remodeling. In Homo sapiens (Human), this protein is Histone H2B.N.